Here is a 101-residue protein sequence, read N- to C-terminus: Non-structural protein NS-S (101 aa).

It belongs to the orthobunyavirus NS-S protein family.

The sequence is that of Non-structural protein NS-S (N) from Equus caballus (Horse).